A 101-amino-acid chain; its full sequence is Small ribosomal subunit protein uS14 (101 aa).

This sequence belongs to the universal ribosomal protein uS14 family. Part of the 30S ribosomal subunit. Contacts proteins S3 and S10.

Binds 16S rRNA, required for the assembly of 30S particles and may also be responsible for determining the conformation of the 16S rRNA at the A site. This Shewanella sp. (strain ANA-3) protein is Small ribosomal subunit protein uS14.